Here is a 559-residue protein sequence, read N- to C-terminus: Urocanate hydratase (559 aa).

NAD(+)-binding positions include 53-54, Gln-131, 177-179, Glu-197, Arg-202, 243-244, 264-268, 274-275, and Tyr-323; these read GG, GMG, NA, QTSAH, and YL. Cys-411 is a catalytic residue. An NAD(+)-binding site is contributed by Gly-493.

Belongs to the urocanase family. NAD(+) serves as cofactor.

It is found in the cytoplasm. The catalysed reaction is 4-imidazolone-5-propanoate = trans-urocanate + H2O. Its pathway is amino-acid degradation; L-histidine degradation into L-glutamate; N-formimidoyl-L-glutamate from L-histidine: step 2/3. Functionally, catalyzes the conversion of urocanate to 4-imidazolone-5-propionate. This Pseudomonas aeruginosa (strain ATCC 15692 / DSM 22644 / CIP 104116 / JCM 14847 / LMG 12228 / 1C / PRS 101 / PAO1) protein is Urocanate hydratase.